We begin with the raw amino-acid sequence, 752 residues long: Iron-sulfur clusters transporter ABCB7, mitochondrial (752 aa).

The N-terminal 22 residues, 1 to 22 (MALLAMHSWRWAAAAAAFEKRR), are a transit peptide targeting the mitochondrion. At 23-140 (HSAILIRPLV…KDRPDLRARV (118 aa)) the chain is on the mitochondrial matrix side. The ABC transmembrane type-1 domain maps to 140–436 (VAISLGFLGG…LGTVYRETRQ (297 aa)). The chain crosses the membrane as a helical span at residues 141–161 (AISLGFLGGAKAMNIVVPFMF). Over 162–185 (KYAVDSLNQMSGNMLNLSDAPNTV) the chain is Mitochondrial intermembrane. The chain crosses the membrane as a helical span at residues 186-206 (ATMATAVLIGYGVSRAGAAFF). Topologically, residues 207-259 (NEVRNAVFGKVAQNSIRRIAKNVFLHLHNLDLGFHLSRQTGALSKAIDRGTRG) are mitochondrial matrix. Residues K216 and K251 each carry the N6-acetyllysine modification. The chain crosses the membrane as a helical span at residues 260 to 280 (ISFVLSALVFNLLPIMFEVML). At 281-290 (VSGVLYYKCG) the chain is on the mitochondrial intermembrane side. The helical transmembrane segment at 291–311 (AQFALVTLGTLGTYTAFTVAV) threads the bilayer. At 312–382 (TRWRTRFRIE…TLAMLNFGQS (71 aa)) the chain is on the mitochondrial matrix side. 315–319 (RTRFR) lines the glutathione pocket. At S336 the chain carries Phosphoserine. Residue Y340 is modified to Phosphotyrosine. The residue at position 342 (T342) is a Phosphothreonine. 378 to 381 (NFGQ) is a glutathione binding site. Residues 383–403 (AIFSVGLTAIMVLASQGIVAG) traverse the membrane as a helical segment. Over 404–409 (TLTVGD) the chain is Mitochondrial intermembrane. Residues 410 to 430 (LVMVNGLLFQLSLPLNFLGTV) traverse the membrane as a helical segment. G428 contacts glutathione. Residues 431-752 (YRETRQALID…SVKGCGNCSC (322 aa)) lie on the Mitochondrial matrix side of the membrane. The ABC transporter domain maps to 472 to 706 (VAFDNVHFEY…PHSIYSEMWH (235 aa)). Residues Y481 and 505–516 (GGSGSGKSTIVR) each bind ATP.

The protein belongs to the ABC transporter superfamily. ABCB family. Heavy Metal importer (TC 3.A.1.210) subfamily. In terms of assembly, homodimer or heterodimer. Interacts with C10orf88/PAAT. Forms a complex with ABCB10 and FECH, where a dimeric FECH bridges ABCB7 and ABCB10 homodimers; this complex may be required for cellular iron homeostasis, mitochondrial function and heme biosynthesis. Interacts with FECH. Interacts with ATP5F1A. Interacts with COX4I1; this interaction allows the regulation of cellular iron homeostasis and cellular reactive oxygen species (ROS) levels in cardiomyocytes.

The protein resides in the mitochondrion inner membrane. The catalysed reaction is (glutathione)4[2Fe(III)-2S] cluster(in) + ATP + H2O = (glutathione)4[2Fe(III)-2S] cluster(out) + ADP + phosphate + H(+). With respect to regulation, ATPase activity is stimulated by glutathione. Functionally, exports glutathione-coordinated iron-sulfur clusters such as [2Fe-2S]-(GS)4 cluster from the mitochondria to the cytosol in an ATP-dependent manner allowing the assembly of the cytosolic iron-sulfur (Fe/S) cluster-containing proteins and participates in iron homeostasis. Moreover, through a functional complex formed of ABCB7, FECH and ABCB10, also plays a role in the cellular iron homeostasis, mitochondrial function and heme biosynthesis. In cardiomyocytes, regulates cellular iron homeostasis and cellular reactive oxygen species (ROS) levels through its interaction with COX4I1. May also play a role in hematopoiesis. The polypeptide is Iron-sulfur clusters transporter ABCB7, mitochondrial (Homo sapiens (Human)).